The following is a 217-amino-acid chain: Protein-L-isoaspartate O-methyltransferase (217 aa).

Residue Ser-67 is part of the active site.

This sequence belongs to the methyltransferase superfamily. L-isoaspartyl/D-aspartyl protein methyltransferase family.

The protein localises to the cytoplasm. It carries out the reaction [protein]-L-isoaspartate + S-adenosyl-L-methionine = [protein]-L-isoaspartate alpha-methyl ester + S-adenosyl-L-homocysteine. Its function is as follows. Catalyzes the methyl esterification of L-isoaspartyl residues in peptides and proteins that result from spontaneous decomposition of normal L-aspartyl and L-asparaginyl residues. It plays a role in the repair and/or degradation of damaged proteins. This Azoarcus sp. (strain BH72) protein is Protein-L-isoaspartate O-methyltransferase.